Reading from the N-terminus, the 319-residue chain is Ubiquinone biosynthesis protein COQ4, mitochondrial (319 aa).

The transit peptide at 1 to 28 (MISRSIFSKSVSLQRSQNRSFLLTAASA) directs the protein to the mitochondrion. Residues His205, Asp206, His209, and Glu221 each contribute to the Zn(2+) site.

This sequence belongs to the COQ4 family. Component of a multi-subunit COQ enzyme complex, composed of at least COQ3, COQ4, COQ5, COQ6, COQ7 and COQ9. It depends on Zn(2+) as a cofactor.

It localises to the mitochondrion inner membrane. The catalysed reaction is a 4-hydroxy-3-methoxy-5-(all-trans-polyprenyl)benzoate + H(+) = a 2-methoxy-6-(all-trans-polyprenyl)phenol + CO2. The protein operates within cofactor biosynthesis; ubiquinone biosynthesis. Functionally, lyase that catalyzes the C1-decarboxylation of 4-hydroxy-3-methoxy-5-(all-trans-polyprenyl)benzoic acid into 2-methoxy-6-(all-trans-polyprenyl)phenol during ubiquinone biosynthesis. The polypeptide is Ubiquinone biosynthesis protein COQ4, mitochondrial (Clavispora lusitaniae (strain ATCC 42720) (Yeast)).